Consider the following 212-residue polypeptide: Deoxyribose-phosphate aldolase (212 aa).

Asp89 serves as the catalytic Proton donor/acceptor. Lys151 functions as the Schiff-base intermediate with acetaldehyde in the catalytic mechanism. Lys180 serves as the catalytic Proton donor/acceptor.

It belongs to the DeoC/FbaB aldolase family. DeoC type 1 subfamily.

It is found in the cytoplasm. It catalyses the reaction 2-deoxy-D-ribose 5-phosphate = D-glyceraldehyde 3-phosphate + acetaldehyde. It participates in carbohydrate degradation; 2-deoxy-D-ribose 1-phosphate degradation; D-glyceraldehyde 3-phosphate and acetaldehyde from 2-deoxy-alpha-D-ribose 1-phosphate: step 2/2. In terms of biological role, catalyzes a reversible aldol reaction between acetaldehyde and D-glyceraldehyde 3-phosphate to generate 2-deoxy-D-ribose 5-phosphate. In Clostridium botulinum (strain Langeland / NCTC 10281 / Type F), this protein is Deoxyribose-phosphate aldolase.